The sequence spans 575 residues: Aspartate--tRNA ligase (575 aa).

E169 lines the L-aspartate pocket. The segment at 193–196 is aspartate; sequence QLFK. Position 215 (R215) interacts with L-aspartate. ATP contacts are provided by residues 215 to 217 and Q224; that span reads RDE. Residue H438 participates in L-aspartate binding. Residue E472 participates in ATP binding. An L-aspartate-binding site is contributed by R479. 524 to 527 contributes to the ATP binding site; sequence GLDR.

It belongs to the class-II aminoacyl-tRNA synthetase family. Type 1 subfamily. In terms of assembly, homodimer.

It localises to the cytoplasm. It carries out the reaction tRNA(Asp) + L-aspartate + ATP = L-aspartyl-tRNA(Asp) + AMP + diphosphate. Its function is as follows. Catalyzes the attachment of L-aspartate to tRNA(Asp) in a two-step reaction: L-aspartate is first activated by ATP to form Asp-AMP and then transferred to the acceptor end of tRNA(Asp). This chain is Aspartate--tRNA ligase, found in Mycoplasma capricolum subsp. capricolum (strain California kid / ATCC 27343 / NCTC 10154).